A 307-amino-acid polypeptide reads, in one-letter code: CRISPR-associated endonuclease Cas1 2 (307 aa).

Mn(2+) contacts are provided by Glu142, His206, and Glu221.

Belongs to the CRISPR-associated endonuclease Cas1 family. Homodimer, forms a heterotetramer with a Cas2 homodimer. Forms oligomers, probably binds nucleic acids as a homodimer. The cofactor is Mg(2+). It depends on Mn(2+) as a cofactor.

Functionally, CRISPR (clustered regularly interspaced short palindromic repeat), is an adaptive immune system that provides protection against mobile genetic elements (viruses, transposable elements and conjugative plasmids). CRISPR clusters contain spacers, sequences complementary to antecedent mobile elements, and target invading nucleic acids. CRISPR clusters are transcribed and processed into CRISPR RNA (crRNA). Acts as a dsDNA endonuclease. Involved in the integration of spacer DNA into the CRISPR cassette. In vitro catalyzes a concerted transesterification reaction on branched DNA, as would be expected during integration of protospacers into the CRISPR leader sequence; Cas2 is not required in vitro. This reaction requires a 3'-OH group at the branch point. Binds ss- and dsDNA and ss- and dsRNA with approximately equal affinity. May be able to anneal complementary DNA strands. This chain is CRISPR-associated endonuclease Cas1 2, found in Saccharolobus solfataricus (strain ATCC 35092 / DSM 1617 / JCM 11322 / P2) (Sulfolobus solfataricus).